The sequence spans 109 residues: Ribonuclease P protein component 4 (109 aa).

Zn(2+)-binding residues include Cys65, Cys68, Cys94, and Cys97.

It belongs to the eukaryotic/archaeal RNase P protein component 4 family. As to quaternary structure, consists of a catalytic RNA component and at least 4-5 protein subunits. Zn(2+) is required as a cofactor.

It is found in the cytoplasm. The catalysed reaction is Endonucleolytic cleavage of RNA, removing 5'-extranucleotides from tRNA precursor.. Functionally, part of ribonuclease P, a protein complex that generates mature tRNA molecules by cleaving their 5'-ends. The protein is Ribonuclease P protein component 4 of Methanococcus vannielii (strain ATCC 35089 / DSM 1224 / JCM 13029 / OCM 148 / SB).